Consider the following 284-residue polypeptide: Probable protein phosphatase 2C 41 (284 aa).

Residues 35–282 (SYGFYLVRGM…DDISCVVVRF (248 aa)) form the PPM-type phosphatase domain. D72, G73, D234, and D273 together coordinate Mn(2+).

The protein belongs to the PP2C family. The cofactor is Mg(2+). Mn(2+) is required as a cofactor.

The enzyme catalyses O-phospho-L-seryl-[protein] + H2O = L-seryl-[protein] + phosphate. It carries out the reaction O-phospho-L-threonyl-[protein] + H2O = L-threonyl-[protein] + phosphate. In Oryza sativa subsp. japonica (Rice), this protein is Probable protein phosphatase 2C 41.